The primary structure comprises 322 residues: ATP-dependent 6-phosphofructokinase (322 aa).

Residues G12, 73–74, and 103–106 contribute to the ATP site; these read RF and GDGT. D104 lines the Mg(2+) pocket. Residue 126–128 coordinates substrate; the sequence is TID. D128 (proton acceptor) is an active-site residue. R155 is a binding site for ADP. Substrate-binding positions include R163 and 170–172; that span reads MGR. Residues 186–188, K212, and 214–216 contribute to the ADP site; these read GSE and KPS. Residues E223, R245, and 251-254 contribute to the substrate site; that span reads HTQR.

Belongs to the phosphofructokinase type A (PFKA) family. ATP-dependent PFK group I subfamily. Prokaryotic clade 'B1' sub-subfamily. As to quaternary structure, homotetramer. Mg(2+) is required as a cofactor.

Its subcellular location is the cytoplasm. The enzyme catalyses beta-D-fructose 6-phosphate + ATP = beta-D-fructose 1,6-bisphosphate + ADP + H(+). It participates in carbohydrate degradation; glycolysis; D-glyceraldehyde 3-phosphate and glycerone phosphate from D-glucose: step 3/4. Its activity is regulated as follows. Allosterically activated by ADP and other diphosphonucleosides, and allosterically inhibited by phosphoenolpyruvate. In terms of biological role, catalyzes the phosphorylation of D-fructose 6-phosphate to fructose 1,6-bisphosphate by ATP, the first committing step of glycolysis. This Mesomycoplasma hyopneumoniae (strain 232) (Mycoplasma hyopneumoniae) protein is ATP-dependent 6-phosphofructokinase.